The following is a 974-amino-acid chain: Probable proton ATPase 1B (974 aa).

Residues 1–23 are compositionally biased toward basic and acidic residues; the sequence is MSSKKYELDAAAFEDKPESHSDA. Positions 1–61 are disordered; that stretch reads MSSKKYELDA…ATDLLPPSKG (61 aa). Helical transmembrane passes span 93–112, 118–137, 265–286, and 295–321; these read GLWG…EFAL, GAIL…YETI, VMLA…YLLA, and ALQF…TLAV. D351 serves as the catalytic 4-aspartylphosphate intermediate. 6 helical membrane passes run 631-651, 662-684, 698-712, 738-761, 813-840, and 869-887; these read AAAD…AMLV, FLTY…CFSL, FFHL…ITLL, VVFV…LWIG, FFFY…AASF, and VWIY…KVLA. Positions 952 to 974 are disordered; it reads REDTHVLNESTSPVNAFSPKVKK.

Belongs to the cation transport ATPase (P-type) (TC 3.A.3) family. Type IIIA subfamily.

It is found in the membrane. The enzyme catalyses ATP + H2O + H(+)(in) = ADP + phosphate + 2 H(+)(out). In Leishmania donovani, this protein is Probable proton ATPase 1B (H1B).